The sequence spans 1439 residues: Myomesin-3 (1439 aa).

The segment at 1-57 (MTLPHSPGSAGEPQASQTVQVHRLEHRQEEEQKEERQHSLQMGSSVQRRTYRSSEEE) is disordered. Over residues 22-38 (HRLEHRQEEEQKEERQH) the composition is skewed to basic and acidic residues. Polar residues predominate over residues 39–48 (SLQMGSSVQR). Residues 119-149 (QRLLRQRRDWKALRQRTEEKVREAKELIELC) adopt a coiled-coil conformation. Ig-like C2-type domains are found at residues 154 to 246 (PWFW…AKVL) and 269 to 362 (PSAE…AYVF). Fibronectin type-III domains lie at 376–471 (SPLN…TGDY), 504–599 (APTN…LKGK), 605–698 (PPAQ…VKQA), 704–799 (APYD…CKEW), and 806–901 (PPYD…LEDK). 2 Ig-like C2-type domains span residues 1122–1207 (PYFQ…LDLT) and 1336–1425 (AKVV…VTIS).

As to quaternary structure, homodimer. Mainly expressed in slow muscle, extraocular muscle and embryonic/neonatal skeletal muscle (at protein level). Expression in skeletal muscle is fiber type specific, with the highest levels in type IIA fibers (intermediate speed) and lower levels in type I fibers.

The protein resides in the cytoplasm. It is found in the myofibril. It localises to the sarcomere. The protein localises to the m line. May link the intermediate filament cytoskeleton to the M-disk of the myofibrils in striated muscle. This Mus musculus (Mouse) protein is Myomesin-3 (Myom3).